Here is a 584-residue protein sequence, read N- to C-terminus: Actin-binding protein IPP (584 aa).

The 68-residue stretch at 37–104 (CDVQLQVGKE…IYTGVVNIAV (68 aa)) folds into the BTB domain. Kelch repeat units lie at residues 296–343 (YTRL…VVGG), 344–390 (MVYA…VCYG), 391–437 (AIYA…EMQG), 439–485 (IYAV…ALND), 487–533 (IYAI…TVNG), and 535–583 (LYVS…GVAV).

In terms of tissue distribution, expression seems confined to tissues derived from trophectoderm and primitive endoderm.

Its subcellular location is the cytoplasm. The protein resides in the cytoskeleton. In terms of biological role, may play a role in organizing the actin cytoskeleton. This chain is Actin-binding protein IPP (Ipp), found in Mus musculus (Mouse).